Reading from the N-terminus, the 360-residue chain is GDSL esterase/lipase At1g06990 (360 aa).

The N-terminal stretch at 1–22 is a signal peptide; that stretch reads MLIHVIIFMIITTMQFSTTCHA. 2 N-linked (GlcNAc...) asparagine glycosylation sites follow: Asn-26 and Asn-31. Ser-44 acts as the Nucleophile in catalysis. N-linked (GlcNAc...) asparagine glycans are attached at residues Asn-73, Asn-126, and Asn-272. Residues Asp-335 and His-338 contribute to the active site.

The protein belongs to the 'GDSL' lipolytic enzyme family.

Its subcellular location is the secreted. The polypeptide is GDSL esterase/lipase At1g06990 (Arabidopsis thaliana (Mouse-ear cress)).